A 112-amino-acid chain; its full sequence is Large ribosomal subunit protein mL53 (112 aa).

This sequence belongs to the mitochondrion-specific ribosomal protein mL53 family. In terms of assembly, component of the mitochondrial large ribosomal subunit (mt-LSU). Mature mammalian 55S mitochondrial ribosomes consist of a small (28S) and a large (39S) subunit. The 28S small subunit contains a 12S ribosomal RNA (12S mt-rRNA) and 30 different proteins. The 39S large subunit contains a 16S rRNA (16S mt-rRNA), a copy of mitochondrial valine transfer RNA (mt-tRNA(Val)), which plays an integral structural role, and 52 different proteins. mL53 is located at the L7/L12 stalk.

It localises to the mitochondrion. The sequence is that of Large ribosomal subunit protein mL53 (MRPL53) from Homo sapiens (Human).